We begin with the raw amino-acid sequence, 189 residues long: Large ribosomal subunit protein bL12c (189 aa).

Disordered regions lie at residues 1-30 (MAAT…HPQP) and 165-189 (EGVS…VSIV). The transit peptide at 1–56 (MAATTTMATLNLPSLTSHPNSSTFPKHPQPLQFPFRTTTNPISLSSTRTTRLRPIA) directs the protein to the chloroplast. Positions 11-24 (NLPSLTSHPNSSTF) are enriched in polar residues. Residues 165-183 (EGVSKDDAEDAKKQLEDAG) show a composition bias toward basic and acidic residues.

As to quaternary structure, component of the chloroplast large ribosomal subunit (LSU). Mature 70S chloroplast ribosomes of higher plants consist of a small (30S) and a large (50S) subunit. The 30S small subunit contains 1 molecule of ribosomal RNA (16S rRNA) and 24 different proteins. The 50S large subunit contains 3 rRNA molecules (23S, 5S and 4.5S rRNA) and 33 different proteins.

Its subcellular location is the plastid. It localises to the chloroplast. Component of the chloroplast ribosome (chloro-ribosome), a dedicated translation machinery responsible for the synthesis of chloroplast genome-encoded proteins, including proteins of the transcription and translation machinery and components of the photosynthetic apparatus. This chain is Large ribosomal subunit protein bL12c (RPL12), found in Spinacia oleracea (Spinach).